A 295-amino-acid chain; its full sequence is Glutamate 5-kinase (295 aa).

Lys9 lines the ATP pocket. Positions 49, 136, and 148 each coordinate substrate. Residues 168 to 169 (TD) and 210 to 216 (TGGMLTK) each bind ATP.

The protein belongs to the glutamate 5-kinase family.

The protein resides in the cytoplasm. It catalyses the reaction L-glutamate + ATP = L-glutamyl 5-phosphate + ADP. It participates in amino-acid biosynthesis; L-proline biosynthesis; L-glutamate 5-semialdehyde from L-glutamate: step 1/2. Its function is as follows. Catalyzes the transfer of a phosphate group to glutamate to form L-glutamate 5-phosphate. The polypeptide is Glutamate 5-kinase (Neisseria gonorrhoeae (strain NCCP11945)).